A 388-amino-acid chain; its full sequence is Large ribosomal subunit protein uL3B (388 aa).

A compositionally biased stretch (basic and acidic residues) spans 1 to 10 (MSHCKFEQPR). The disordered stretch occupies residues 1–34 (MSHCKFEQPRHGSLGFLPRKRASRQRGKVKAFPK). Residues 18–31 (PRKRASRQRGKVKA) are compositionally biased toward basic residues.

This sequence belongs to the universal ribosomal protein uL3 family. As to quaternary structure, component of the large ribosomal subunit (LSU). Mature yeast ribosomes consist of a small (40S) and a large (60S) subunit. The 40S small subunit contains 1 molecule of ribosomal RNA (18S rRNA) and at least 33 different proteins. The large 60S subunit contains 3 rRNA molecules (25S, 5.8S and 5S rRNA) and at least 46 different proteins. uL3 forms together with ES39L one of the contact sites for the signal recognition particle that targets ribosomes to the endoplasmic reticulum membrane.

It localises to the cytoplasm. Functionally, component of the ribosome, a large ribonucleoprotein complex responsible for the synthesis of proteins in the cell. The small ribosomal subunit (SSU) binds messenger RNAs (mRNAs) and translates the encoded message by selecting cognate aminoacyl-transfer RNA (tRNA) molecules. The large subunit (LSU) contains the ribosomal catalytic site termed the peptidyl transferase center (PTC), which catalyzes the formation of peptide bonds, thereby polymerizing the amino acids delivered by tRNAs into a polypeptide chain. The nascent polypeptides leave the ribosome through a tunnel in the LSU and interact with protein factors that function in enzymatic processing, targeting, and the membrane insertion of nascent chains at the exit of the ribosomal tunnel. uL3 plays a role in coordinating processes of accommodating the aminoacyl-tRNA in the PTC. In Schizosaccharomyces pombe (strain 972 / ATCC 24843) (Fission yeast), this protein is Large ribosomal subunit protein uL3B (rpl302).